The sequence spans 276 residues: MRSALLLACLLATASAFSVRSWLRRARAGDSEENAVLKSRHRYYLYRYAYPPLHRYKGSDSSEEEGDGSEEEEEGGAPSHAGTQAAGEGLTLGDVGPGGDAASAHQDCKGGQKGTRGDSGDEDSDEEEEEEEEEEEEEEVEEQDVSVNGTSTNTTAETPHGNNTVAAEEEEDDDEEEEEEEEEEEEAEATTAAATTAQDEVTTLGDEQRSEVTTAGEQWEYEVTVGARGDEGPTESSYGDQEEPARGDSYRAYEDEYGYYKGHGYDMYGQDYYYNQ.

Residues 1–16 form the signal peptide; the sequence is MRSALLLACLLATASA. A disordered region spans residues 54 to 251; sequence HRYKGSDSSE…EEPARGDSYR (198 aa). The span at 61-75 shows a compositional bias: acidic residues; the sequence is SSEEEGDGSEEEEEG. Residues 106-119 show a composition bias toward basic and acidic residues; that stretch reads QDCKGGQKGTRGDS. The Cell attachment site signature appears at 116-118; that stretch reads RGD. Acidic residues predominate over residues 120–144; sequence GDEDSDEEEEEEEEEEEEEEVEEQD. Positions 145-165 are enriched in polar residues; the sequence is VSVNGTSTNTTAETPHGNNTV. 3 N-linked (GlcNAc...) asparagine glycosylation sites follow: Asn-148, Asn-153, and Asn-162. Residues 167-188 are compositionally biased toward acidic residues; that stretch reads AEEEEDDDEEEEEEEEEEEEAE. Positions 189–200 are enriched in low complexity; the sequence is ATTAAATTAQDE. A Cell attachment site motif is present at residues 228 to 230; that stretch reads RGD. Positions 246-248 match the Integrin-binding motif motif; it reads RGD. Sulfotyrosine is present on residues Tyr-272 and Tyr-273.

As to quaternary structure, monomer. Interacts with integrins; the interaction promotes cell adhesion. Phosphorylated on serine and threonine residues.

The protein resides in the secreted. In terms of biological role, binds tightly to hydroxyapatite. Appears to form an integral part of the mineralized matrix. Probably important to cell-matrix interaction. Promotes adhesion and migration of various cells via the alpha-V/beta-3 integrin receptor (ITGAV:ITGB3). This chain is Integrin-binding sialoprotein (IBSP), found in Gallus gallus (Chicken).